The chain runs to 643 residues: NADH-ubiquinone oxidoreductase chain 5 (643 aa).

A run of 16 helical transmembrane segments spans residues 7–27 (IIILTINISIIITLLSSVFFF), 64–84 (LLKTLAILSLFPLFIEIIFNI), 114–134 (TFLSVALIVSWSILEFSYYYM), 140–160 (PNNFFRLLIIFLLNMIILTST), 163–183 (IFLLFIGWEGVGFLSFLLISW), 208–228 (ILLFFSLSITLFNTWSLPEIF), 230–250 (ISAPNTFNNLLLVGLLIAAAG), 277–297 (SSTMVVAGIFLLIRLSPLYAC), 301–321 (FNTWCLILGSITAIFAATTAI), 338–358 (LGLMMVAIGLNQPSIALFHIC), 398–418 (AACIILGSLALSGIPFLPGFY), 437–457 (IVLSLLATLLTSVYSFRIIFF), 486–506 (ALGTILSGWILTNLTVLVPII), 511–531 (VLKTAALLLTITGVLFSISIL), 555–575 (FYENISHILFLFYSFTISLSL), and 615–635 (YLLFSFLTLLIIIALSLTTIS).

Belongs to the complex I subunit 5 family.

It localises to the mitochondrion inner membrane. The catalysed reaction is a ubiquinone + NADH + 5 H(+)(in) = a ubiquinol + NAD(+) + 4 H(+)(out). Functionally, core subunit of the mitochondrial membrane respiratory chain NADH dehydrogenase (Complex I) that is believed to belong to the minimal assembly required for catalysis. Complex I functions in the transfer of electrons from NADH to the respiratory chain. The immediate electron acceptor for the enzyme is believed to be ubiquinone. In Patiria pectinifera (Starfish), this protein is NADH-ubiquinone oxidoreductase chain 5 (ND5).